The primary structure comprises 352 residues: Ion-translocating oxidoreductase complex subunit D (352 aa).

A run of 4 helical transmembrane segments spans residues 20-40 (IMLLVLIAALPGIAAQTWFFG), 42-62 (GTLFQIVLAAITALVAEAIVL), 69-91 (VASHLQDYSALLTGLLLAVSIPP), and 123-143 (PAMIGYVVLLISFPVQMTSWL). T187 carries the FMN phosphoryl threonine modification. A run of 5 helical transmembrane segments spans residues 215 to 235 (LAGVGWQWVNLAWLVGGVFLL), 242 to 262 (WHIPVSFLLTLALCAALGWLF), 267 to 287 (LASPQLHLLSGATMLGAFFIL), 301 to 321 (LIFGALAGVLVWLIRSFGGYP), and 322 to 342 (DGVAFAVLLANITVPLIDYYT).

This sequence belongs to the NqrB/RnfD family. In terms of assembly, the complex is composed of six subunits: RsxA, RsxB, RsxC, RsxD, RsxE and RsxG. The cofactor is FMN.

The protein localises to the cell inner membrane. Functionally, part of a membrane-bound complex that couples electron transfer with translocation of ions across the membrane. Required to maintain the reduced state of SoxR. The protein is Ion-translocating oxidoreductase complex subunit D of Salmonella typhi.